The sequence spans 371 residues: Cysteine proteinase 1 (371 aa).

Positions 1-18 (MAHRVLLLLSLASAAAVA) are cleaved as a signal peptide. Positions 19–136 (AAVDAEDPLI…HEAPVLPTDG (118 aa)) are cleaved as a propeptide — activation peptide. Cystine bridges form between Cys158/Cys208 and Cys192/Cys241. The active site involves Cys161. Asn254 is a glycosylation site (N-linked (GlcNAc...) asparagine). An intrachain disulfide couples Cys297 to Cys354. Catalysis depends on residues His303 and Asn330.

The protein belongs to the peptidase C1 family. In terms of tissue distribution, expressed during the late stages of seed ripening, in mature seeds and during germination.

Functionally, involved in the degradation of the storage protein zein. May play a role in proteolysis during emergencies. The sequence is that of Cysteine proteinase 1 (CCP1) from Zea mays (Maize).